A 226-amino-acid polypeptide reads, in one-letter code: uncharacterized protein (226 aa).

This is an uncharacterized protein from Bacillus subtilis (strain 168).